The primary structure comprises 956 residues: Plasma membrane ATPase 3 (956 aa).

The Cytoplasmic segment spans residues 1–65 (MGEKPEVLDA…EKKESKFSKF (65 aa)). The helical transmembrane segment at 66–85 (LGFMWNPLSWVMEAAAIMAI) threads the bilayer. The Extracellular portion of the chain corresponds to 86–97 (ALANGGGKPPDW). The chain crosses the membrane as a helical span at residues 98–118 (QDFVGIITLLIINSTISFIEE). The Cytoplasmic segment spans residues 119–247 (NNAGNAAAAL…GHFQKVLTAI (129 aa)). Residues 248–268 (GNFCICSIAVGMIIEIIVMYP) traverse the membrane as a helical segment. The Extracellular segment spans residues 269-278 (IQHRKYRPGI). The chain crosses the membrane as a helical span at residues 279–300 (DNLLVLLIGGIPIAMPTVLSVT). The Cytoplasmic segment spans residues 301-647 (MAIGSHRLAQ…TSRAIFQRMK (347 aa)). The 4-aspartylphosphate intermediate role is filled by Asp333. Mg(2+) is bound by residues Asp592 and Asp596. A helical transmembrane segment spans residues 648-669 (NYTIYAVSITIRIVLGFMLLAL). The Extracellular portion of the chain corresponds to 670 to 674 (IWQFD). A helical transmembrane segment spans residues 675-697 (FPPFMVLIIAILNDGTIMTISKD). At 698–713 (RVKPSPLPDSWKLAEI) the chain is on the cytoplasmic side. Residues 714-734 (FTTGVVLGGYLAMMTVIFFWA) form a helical membrane-spanning segment. Residues 735–759 (AYKTNFFPRVFGVSTLEKTATDDFR) lie on the Extracellular side of the membrane. Residues 760–780 (KLASAIYLQVSTISQALIFVT) form a helical membrane-spanning segment. At 781 to 792 (RSRSWSFMERPG) the chain is on the cytoplasmic side. Residues 793–813 (LLLVVAFFIAQLVATLIAVYA) form a helical membrane-spanning segment. The Extracellular segment spans residues 814–822 (NWSFAAIEG). The chain crosses the membrane as a helical span at residues 823 to 843 (IGWGWAGVIWLYNIVFYIPLD). Over 844-956 (LXXFLIRYAL…IETIQQAYTV (113 aa)) the chain is Cytoplasmic.

The protein belongs to the cation transport ATPase (P-type) (TC 3.A.3) family. Type IIIA subfamily. Expressed in roots, stems, leaves from both vegetative and flowering plants, and flowers at early and late stages of development with highest expression levels found in flowers and root tissue.

The protein localises to the cell membrane. The catalysed reaction is ATP + H2O + H(+)(in) = ADP + phosphate + 2 H(+)(out). Functionally, the plasma membrane ATPase of plants and fungi is a hydrogen ion pump. The proton gradient it generates drives the active transport of nutrients by H(+)-symport. The resulting external acidification and/or internal alkinization may mediate growth responses. This Nicotiana plumbaginifolia (Leadwort-leaved tobacco) protein is Plasma membrane ATPase 3 (PMA3).